The sequence spans 196 residues: Small ribosomal subunit protein uS4c (196 aa).

Residues 89-157 form the S4 RNA-binding domain; that stretch reads MRLDNILFRL…VQNYIASSDP (69 aa).

This sequence belongs to the universal ribosomal protein uS4 family. In terms of assembly, part of the 30S ribosomal subunit. Contacts protein S5. The interaction surface between S4 and S5 is involved in control of translational fidelity.

It localises to the plastid. It is found in the chloroplast. In terms of biological role, one of the primary rRNA binding proteins, it binds directly to 16S rRNA where it nucleates assembly of the body of the 30S subunit. Functionally, with S5 and S12 plays an important role in translational accuracy. The protein is Small ribosomal subunit protein uS4c (rps4) of Elymus canadensis (Canada wild rye).